The sequence spans 581 residues: NADH-quinone oxidoreductase subunit C/D (581 aa).

Residues 1 to 172 (MSGAELISDL…PPFVMTAARF (172 aa)) are NADH dehydrogenase I subunit C. The tract at residues 196–581 (ELMILNYGPH…IDYVMSDVDR (386 aa)) is NADH dehydrogenase I subunit D.

The protein in the N-terminal section; belongs to the complex I 30 kDa subunit family. In the C-terminal section; belongs to the complex I 49 kDa subunit family. NDH-1 is composed of 13 different subunits. Subunits NuoB, CD, E, F, and G constitute the peripheral sector of the complex.

The protein resides in the cell inner membrane. It carries out the reaction a quinone + NADH + 5 H(+)(in) = a quinol + NAD(+) + 4 H(+)(out). In terms of biological role, NDH-1 shuttles electrons from NADH, via FMN and iron-sulfur (Fe-S) centers, to quinones in the respiratory chain. The immediate electron acceptor for the enzyme in this species is believed to be ubiquinone. Couples the redox reaction to proton translocation (for every two electrons transferred, four hydrogen ions are translocated across the cytoplasmic membrane), and thus conserves the redox energy in a proton gradient. The sequence is that of NADH-quinone oxidoreductase subunit C/D from Rhodopseudomonas palustris (strain BisA53).